The sequence spans 145 residues: Protoporphyrinogen IX oxidase (145 aa).

The next 4 helical transmembrane spans lie at Leu6–Leu26, Ala61–Leu81, Thr83–Ala103, and Ile123–Pro143. His12 provides a ligand contact to heme. Lys88 contacts heme.

The protein belongs to the HemJ family. As to quaternary structure, homodimer. It depends on heme b as a cofactor.

It localises to the cell membrane. It carries out the reaction protoporphyrinogen IX + 3 A = protoporphyrin IX + 3 AH2. It participates in porphyrin-containing compound metabolism; protoporphyrin-IX biosynthesis; protoporphyrin-IX from protoporphyrinogen-IX: step 1/1. Its function is as follows. Catalyzes the oxidation of protoporphyrinogen IX to protoporphyrin IX. Is involved in the biosynthesis of tetrapyrrole molecules like heme. Does not use oxygen or artificial electron acceptors such as menadione or benzoquinone. In Rickettsia prowazekii (strain Madrid E), this protein is Protoporphyrinogen IX oxidase.